The chain runs to 241 residues: DNA repair protein RecO (241 aa).

The protein belongs to the RecO family.

Its function is as follows. Involved in DNA repair and RecF pathway recombination. This Vibrio cholerae serotype O1 (strain ATCC 39541 / Classical Ogawa 395 / O395) protein is DNA repair protein RecO.